Consider the following 160-residue polypeptide: 3-hydroxyacyl-[acyl-carrier-protein] dehydratase FabZ (160 aa).

Histidine 63 is an active-site residue.

It belongs to the thioester dehydratase family. FabZ subfamily.

The protein localises to the cytoplasm. It carries out the reaction a (3R)-hydroxyacyl-[ACP] = a (2E)-enoyl-[ACP] + H2O. In terms of biological role, involved in unsaturated fatty acids biosynthesis. Catalyzes the dehydration of short chain beta-hydroxyacyl-ACPs and long chain saturated and unsaturated beta-hydroxyacyl-ACPs. This chain is 3-hydroxyacyl-[acyl-carrier-protein] dehydratase FabZ, found in Xylella fastidiosa (strain M12).